We begin with the raw amino-acid sequence, 561 residues long: MLPTFRLMTCAIVFVLPGLGHASQCPDWPAAKARSEVTALQQQIAEWDDSYHRQGISQIADELYDQARQKLNLWRSCFAVSTPESDPLKTAVGPLPHPVPHTGVNKLADEGSVKGWLKGRNDLWIQPKVDGVAVTLVYEKGRLVQAISRGDGRKGQDWTSQARLIKAIAQQLPQAESTILQGELYWRLDDHIQAASGSVNARSKVAGLLARQTISPQQADAIGLFVWDWPNGPADMAQRLAGLQAMGFEDSAAYTHPLENYVQAARWREHWYRNPLPFATDGVILRQGQRPPAQRWQASAPYWIAAWKHPYAQALAEVRKVNFKIGRSGRITPVLELTPVRLDDRTVSRISTGSLQRWQTLDIRPGDQIAVSLAGLTIPRLDGVVSRAAERADMIIPRADDFHELSCWQATPGCESQFRARLAWLSGKKGLALPGVGPGTWNTLIDNGQIMGLLDWMTLNHAELVNIPGFAERSSAKLLDSLQTARERPFQTWLKAIGLPPTGGARLPDNWHELAGRSVEQWQAEPGIGPGRAARLRAFFQDPQVQALSQQLQAQSISGFK.

The active-site N6-AMP-lysine intermediate is the Lys128.

Belongs to the NAD-dependent DNA ligase family. LigB subfamily.

The catalysed reaction is NAD(+) + (deoxyribonucleotide)n-3'-hydroxyl + 5'-phospho-(deoxyribonucleotide)m = (deoxyribonucleotide)n+m + AMP + beta-nicotinamide D-nucleotide.. Catalyzes the formation of phosphodiester linkages between 5'-phosphoryl and 3'-hydroxyl groups in double-stranded DNA using NAD as a coenzyme and as the energy source for the reaction. The polypeptide is DNA ligase B (Pseudomonas syringae pv. syringae (strain B728a)).